Consider the following 81-residue polypeptide: Protein GPR15LG (81 aa).

An N-terminal signal peptide occupies residues 1–24 (MRFLALTSLLCILLLCLSFFSAEG). 2 disulfides stabilise this stretch: Cys-40–Cys-63 and Cys-41–Cys-60.

Interacts with SUSD2; the interaction is direct.

The protein localises to the secreted. Functionally, highly cationic protein that has multiple functions. Acts as a chemotactic factor that mediates lymphocytes recruitment to epithelia through binding and activation of the G-protein coupled receptor GPR15. May be a tumor suppressor; together with SUSD2 has a growth inhibitory effect on colon cancer cells which includes G1 cell cycle arrest. May regulate keratinocyte proliferation. In addition, through activation of Mas-related G protein-coupled receptors (MRGPRs) contributes to pruritogenesis by activating itch-selective sensory neurons and mast cells degranulation. Its function is as follows. Has antimicrobial activity against Gram-positive bacteria, including Staphylococcus aureus and Actinomyces spec., and Mycoplasma hominis and lentivirus. This is Protein GPR15LG (GPR15LG) from Sus scrofa (Pig).